Here is a 187-residue protein sequence, read N- to C-terminus: Pseudo histidine-containing phosphotransfer protein 1 (187 aa).

Positions 74 to 169 constitute an HPt domain; the sequence is SPNFVEEVVT…AVLRQKLESY (96 aa).

Functionally, functions as a two-component phosphorelay mediator between cytokinin sensor histidine kinases and response regulators (B-type ARRs). Plays an important role in propagating cytokinin signal transduction. The protein is Pseudo histidine-containing phosphotransfer protein 1 of Oryza sativa subsp. japonica (Rice).